The primary structure comprises 493 residues: Intermediate cleaving peptidase 55, mitochondrial (493 aa).

The N-terminal 19 residues, 1–19 (MQFLARNLVRRVSRTQVVS), are a transit peptide targeting the mitochondrion. 5 residues coordinate Mn(2+): Asp296, Asp307, His383, Glu410, and Glu433.

It belongs to the peptidase M24B family. The cofactor is Mn(2+).

The protein localises to the mitochondrion. It is found in the nucleus. In terms of biological role, aminopeptidase which cleaves preprotein intermediates that carry destabilizing N-ter amino acid residues after the mitochondrial processing peptidase (MPP) cleavage site and is thus critical for stabilization of the mitochondrial proteome. In Arabidopsis thaliana (Mouse-ear cress), this protein is Intermediate cleaving peptidase 55, mitochondrial.